The following is a 191-amino-acid chain: Leucyl/phenylalanyl-tRNA--protein transferase (191 aa).

The protein belongs to the L/F-transferase family.

It localises to the cytoplasm. The enzyme catalyses N-terminal L-lysyl-[protein] + L-leucyl-tRNA(Leu) = N-terminal L-leucyl-L-lysyl-[protein] + tRNA(Leu) + H(+). It catalyses the reaction N-terminal L-arginyl-[protein] + L-leucyl-tRNA(Leu) = N-terminal L-leucyl-L-arginyl-[protein] + tRNA(Leu) + H(+). The catalysed reaction is L-phenylalanyl-tRNA(Phe) + an N-terminal L-alpha-aminoacyl-[protein] = an N-terminal L-phenylalanyl-L-alpha-aminoacyl-[protein] + tRNA(Phe). Functionally, functions in the N-end rule pathway of protein degradation where it conjugates Leu, Phe and, less efficiently, Met from aminoacyl-tRNAs to the N-termini of proteins containing an N-terminal arginine or lysine. The chain is Leucyl/phenylalanyl-tRNA--protein transferase from Gloeothece citriformis (strain PCC 7424) (Cyanothece sp. (strain PCC 7424)).